The chain runs to 601 residues: DNA ligase (601 aa).

Asp258 contacts ATP. Residue Lys260 is the N6-AMP-lysine intermediate of the active site. The ATP site is built by Arg265, Arg280, Glu310, Phe350, Arg427, and Lys433.

The protein belongs to the ATP-dependent DNA ligase family. The cofactor is Mg(2+). Ca(2+) serves as cofactor. Mn(2+) is required as a cofactor.

It carries out the reaction ATP + (deoxyribonucleotide)n-3'-hydroxyl + 5'-phospho-(deoxyribonucleotide)m = (deoxyribonucleotide)n+m + AMP + diphosphate.. DNA ligase that seals nicks in double-stranded DNA during DNA replication, DNA recombination and DNA repair. Also has low activity with dATP. Inactive with NAD(+), CTP, GTP, UTP, dCTP, dGTP or dTTP. This Saccharolobus shibatae (strain ATCC 51178 / DSM 5389 / JCM 8931 / NBRC 15437 / B12) (Sulfolobus shibatae) protein is DNA ligase.